The chain runs to 366 residues: MFEINPVKNRIQDLSDRTAVLRGYLFDYDAKKERLEEVNAELEQPDVWNEPERAQALGKERSTLEEIVTTIDQLEQGLEDVSGLLELAVEADDEETFNETIAELEVLDGKLGQLEFRRMFSGEYDRANCYLDLQAGSGGTEAQDWASMLLRMYLRWAESRGFKTEIIEESDGDVAGLKSATVKIIGEYAFGWLRTETGVHRLVRKSPFDSGGRRHTSFSSAFVYPEVDDDIDIEINPADLRIDVYRASGAGGQHVNKTESAVRITHIPTNIVTQCQNDRSQHKNKDQAMKQLKAKLYEFEMQKKNADKQVLEDNKSDIGWGSQIRSYVLDDSRIKDLRTGVETRNTQAVLDGDLDKFIEASLKAGL.

Position 253 is an N5-methylglutamine (Q253).

The protein belongs to the prokaryotic/mitochondrial release factor family. In terms of processing, methylated by PrmC. Methylation increases the termination efficiency of RF2.

Its subcellular location is the cytoplasm. Functionally, peptide chain release factor 2 directs the termination of translation in response to the peptide chain termination codons UGA and UAA. In Yersinia pseudotuberculosis serotype I (strain IP32953), this protein is Peptide chain release factor 2.